The following is a 140-amino-acid chain: Large ribosomal subunit protein uL14 (140 aa).

Ser-17 bears the Phosphoserine mark. Tyr-38 carries the phosphotyrosine modification.

The protein belongs to the universal ribosomal protein uL14 family. As to quaternary structure, component of the large ribosomal subunit.

It localises to the cytoplasm. In terms of biological role, component of the large ribosomal subunit. The ribosome is a large ribonucleoprotein complex responsible for the synthesis of proteins in the cell. The protein is Large ribosomal subunit protein uL14 (RPL23) of Canis lupus familiaris (Dog).